The sequence spans 77 residues: Cysteine-rich protein 1 (77 aa).

The region spanning 2–63 is the LIM zinc-binding domain; it reads PKCPKCSKEV…HPCYAAMFGP (62 aa). Lysine 9 and lysine 22 each carry N6-acetyllysine. At arginine 68 the chain carries Omega-N-methylarginine.

In terms of biological role, seems to have a role in zinc absorption and may function as an intracellular zinc transport protein. The protein is Cysteine-rich protein 1 (CRIP1) of Bos taurus (Bovine).